Here is a 279-residue protein sequence, read N- to C-terminus: Biotin synthase (279 aa).

The Radical SAM core domain occupies 2 to 228 (KTIMLCAICS…ETRVMIAGGR (227 aa)). Positions 17, 21, and 24 each coordinate [4Fe-4S] cluster. The [2Fe-2S] cluster site is built by Cys61, Cys96, Cys154, and Arg221.

The protein belongs to the radical SAM superfamily. Biotin synthase family. In terms of assembly, homodimer. [4Fe-4S] cluster serves as cofactor. Requires [2Fe-2S] cluster as cofactor.

It carries out the reaction (4R,5S)-dethiobiotin + (sulfur carrier)-SH + 2 reduced [2Fe-2S]-[ferredoxin] + 2 S-adenosyl-L-methionine = (sulfur carrier)-H + biotin + 2 5'-deoxyadenosine + 2 L-methionine + 2 oxidized [2Fe-2S]-[ferredoxin]. Its pathway is cofactor biosynthesis; biotin biosynthesis; biotin from 7,8-diaminononanoate: step 2/2. Its function is as follows. Catalyzes the conversion of dethiobiotin (DTB) to biotin by the insertion of a sulfur atom into dethiobiotin via a radical-based mechanism. This chain is Biotin synthase, found in Campylobacter concisus (strain 13826).